The chain runs to 101 residues: Citrate lyase acyl carrier protein (101 aa).

S14 bears the O-(phosphoribosyl dephospho-coenzyme A)serine mark.

It belongs to the CitD family. In terms of assembly, oligomer with a subunit composition of (alpha,beta,gamma)6.

It is found in the cytoplasm. Its function is as follows. Covalent carrier of the coenzyme of citrate lyase. In Latilactobacillus sakei subsp. sakei (strain 23K) (Lactobacillus sakei subsp. sakei), this protein is Citrate lyase acyl carrier protein.